A 353-amino-acid polypeptide reads, in one-letter code: G-protein complex alpha subunit gpaA (353 aa).

Positions 1–25 are disordered; that stretch reads MGCGMSTEDKEGKARNEEIENQLKR. Over residues 7 to 25 the composition is skewed to basic and acidic residues; sequence TEDKEGKARNEEIENQLKR. Residues 32-353 enclose the G-alpha domain; sequence NEIKMLLLGA…QENLRLCGLI (322 aa). The G1 motif stretch occupies residues 35–48; the sequence is KMLLLGAGESGKST. A divalent metal cation is bound by residues Ser47 and Thr181. The tract at residues 173-181 is G2 motif; it reads DVLRSRVKT. The segment at 196-205 is G3 motif; that stretch reads YRMFDVGGQR. The interval 265 to 272 is G4 motif; the sequence is ILFLNKID. The G5 motif stretch occupies residues 323-328; the sequence is TCATDT.

This sequence belongs to the G-alpha family. G(q) subfamily. As to quaternary structure, g proteins are composed of 3 units; alpha, beta and gamma. The alpha chain contains the guanine nucleotide binding site. Interacts with gprM.

Its function is as follows. G-protein complex alpha subunit that plays a role in conidiation and regulation of the biosynthesis of secondary metabolites such as dihydroxynaphthalene (DHN)-melanin, via interaction with the G protein-coupled receptor gprM. The chain is G-protein complex alpha subunit gpaA from Aspergillus fumigatus (strain CBS 144.89 / FGSC A1163 / CEA10) (Neosartorya fumigata).